A 30-amino-acid chain; its full sequence is uncharacterized protein (30 aa).

A helical membrane pass occupies residues 9–26; it reads YRLVIIVLISVYYRYRFF.

It localises to the plastid. The protein resides in the chloroplast membrane. This is an uncharacterized protein from Marchantia polymorpha (Common liverwort).